A 287-amino-acid polypeptide reads, in one-letter code: MIVSAMEKAEILVEALPYIKDFYGRRVVIKYGGAAMTDCELKQKVMQDIVLMKFVGMHPIVVHGGGPEINQMLSRLGIQSEFVNGFRVTDAATMEIVEMVLGGKVNKEIVAGIHASGGKAVGISGKDGMLIQAHPADGSGKMGFVGEVQYVNPELIEKVIENGYIPVIAPIGIGEDQQSYNINADLVAAAIAVSMKADKLVLLTDVPGLMMNPADSNSLISVLKVSEVENYVQEGIIAGGMVPKVQCCVEAVTGGVGRTHIIDGRVPHSILLEIFTDEGIGTMVVNE.

Substrate contacts are provided by residues 65–66, Arg-87, and Asn-181; that span reads GG.

Belongs to the acetylglutamate kinase family. ArgB subfamily.

It localises to the cytoplasm. It carries out the reaction N-acetyl-L-glutamate + ATP = N-acetyl-L-glutamyl 5-phosphate + ADP. The protein operates within amino-acid biosynthesis; L-arginine biosynthesis; N(2)-acetyl-L-ornithine from L-glutamate: step 2/4. Catalyzes the ATP-dependent phosphorylation of N-acetyl-L-glutamate. In Syntrophomonas wolfei subsp. wolfei (strain DSM 2245B / Goettingen), this protein is Acetylglutamate kinase.